Consider the following 457-residue polypeptide: 3-isopropylmalate dehydratase large subunit (457 aa).

[4Fe-4S] cluster-binding residues include cysteine 337, cysteine 397, and cysteine 400.

It belongs to the aconitase/IPM isomerase family. LeuC type 1 subfamily. In terms of assembly, heterodimer of LeuC and LeuD. [4Fe-4S] cluster serves as cofactor.

The catalysed reaction is (2R,3S)-3-isopropylmalate = (2S)-2-isopropylmalate. It functions in the pathway amino-acid biosynthesis; L-leucine biosynthesis; L-leucine from 3-methyl-2-oxobutanoate: step 2/4. In terms of biological role, catalyzes the isomerization between 2-isopropylmalate and 3-isopropylmalate, via the formation of 2-isopropylmaleate. This is 3-isopropylmalate dehydratase large subunit from Oenococcus oeni (strain ATCC BAA-331 / PSU-1).